The sequence spans 255 residues: NADH dehydrogenase [ubiquinone] flavoprotein 2, mitochondrial (255 aa).

Residues methionine 1 to histidine 35 constitute a mitochondrion transit peptide. Residues cysteine 130, cysteine 135, cysteine 171, and cysteine 175 each coordinate [2Fe-2S] cluster. Positions arginine 214 to cysteine 255 are disordered.

It belongs to the complex I 24 kDa subunit family. As to quaternary structure, complex I is composed of at least 49 different subunits. This is a component of the flavoprotein-sulfur (FP) fragment of the enzyme. [2Fe-2S] cluster is required as a cofactor.

It localises to the mitochondrion inner membrane. It carries out the reaction a ubiquinone + NADH + 5 H(+)(in) = a ubiquinol + NAD(+) + 4 H(+)(out). Its function is as follows. Core subunit of the mitochondrial membrane respiratory chain NADH dehydrogenase (Complex I) that is believed to belong to the minimal assembly required for catalysis. Complex I functions in the transfer of electrons from NADH to the respiratory chain. The immediate electron acceptor for the enzyme is believed to be ubiquinone. In Arabidopsis thaliana (Mouse-ear cress), this protein is NADH dehydrogenase [ubiquinone] flavoprotein 2, mitochondrial.